The primary structure comprises 185 residues: Alcohol dehydrogenase 1 (185 aa).

NAD(+) contacts are provided by residues 10-15, aspartate 34, lysine 39, 103-105, and arginine 180; these read GLGGVG and VGV.

Belongs to the zinc-containing alcohol dehydrogenase family. Class-I subfamily. Homodimer. Zn(2+) is required as a cofactor.

It localises to the cytoplasm. It catalyses the reaction a primary alcohol + NAD(+) = an aldehyde + NADH + H(+). The enzyme catalyses a secondary alcohol + NAD(+) = a ketone + NADH + H(+). In Anas platyrhynchos (Mallard), this protein is Alcohol dehydrogenase 1 (ADH1).